The chain runs to 399 residues: Acetate kinase (399 aa).

Position 7 (Asn-7) interacts with Mg(2+). Lys-14 is an ATP binding site. Arg-91 contacts substrate. The active-site Proton donor/acceptor is the Asp-148. ATP is bound by residues 208–212 (HLGNG), 283–285 (DFR), and 331–335 (GIGEN). Residue Glu-384 coordinates Mg(2+).

This sequence belongs to the acetokinase family. As to quaternary structure, homodimer. The cofactor is Mg(2+). Requires Mn(2+) as cofactor.

The protein localises to the cytoplasm. It catalyses the reaction acetate + ATP = acetyl phosphate + ADP. Its pathway is metabolic intermediate biosynthesis; acetyl-CoA biosynthesis; acetyl-CoA from acetate: step 1/2. Functionally, catalyzes the formation of acetyl phosphate from acetate and ATP. Can also catalyze the reverse reaction. The sequence is that of Acetate kinase from Acetivibrio thermocellus (strain ATCC 27405 / DSM 1237 / JCM 9322 / NBRC 103400 / NCIMB 10682 / NRRL B-4536 / VPI 7372) (Clostridium thermocellum).